We begin with the raw amino-acid sequence, 511 residues long: uncharacterized protein (511 aa).

Residues Ile-13–Asn-45 enclose the LisH domain. Residues Pro-172 to Pro-212 are disordered. Residues Asn-197–Ser-210 are compositionally biased toward polar residues.

This is an uncharacterized protein from Encephalitozoon cuniculi (strain GB-M1) (Microsporidian parasite).